The chain runs to 256 residues: Thioredoxin-dependent peroxide reductase, mitochondrial (256 aa).

The transit peptide at 1-61 (MAAAVGRLLR…KLFSTSSSYH (61 aa)) directs the protein to the mitochondrion. A Thioredoxin domain is found at 63-221 (PAVTQHAPYF…TLRLVKAFQY (159 aa)). Lys83 carries the N6-succinyllysine modification. Lys91 is modified (N6-acetyllysine; alternate). Position 91 is an N6-succinyllysine; alternate (Lys91). Catalysis depends on Cys108, which acts as the Cysteine sulfenic acid (-SOH) intermediate. Thr146 carries the post-translational modification Phosphothreonine.

The protein belongs to the peroxiredoxin family. AhpC/Prx1 subfamily. As to quaternary structure, homodimer; disulfide-linked, upon oxidation. 6 homodimers assemble to form a ring-like dodecamer. Interacts with NEK6. Interacts with LRRK2. Interacts with MAP3K13. Interacts with RPS6KC1 (via PX domain). Post-translationally, phosphorylated by LRRK2; phosphorylation reduces perodixase activity. The enzyme can be inactivated by further oxidation of the cysteine sulfenic acid (C(P)-SOH) to sulphinic acid (C(P)-SO2H) and sulphonic acid (C(P)-SO3H) instead of its condensation to a disulfide bond. In terms of processing, S-palmitoylated.

It is found in the mitochondrion. It localises to the cytoplasm. The protein localises to the early endosome. The catalysed reaction is a hydroperoxide + [thioredoxin]-dithiol = an alcohol + [thioredoxin]-disulfide + H2O. In terms of biological role, thiol-specific peroxidase that catalyzes the reduction of hydrogen peroxide and organic hydroperoxides to water and alcohols, respectively. Plays a role in cell protection against oxidative stress by detoxifying peroxides. Acts synergistically with MAP3K13 to regulate the activation of NF-kappa-B in the cytosol. Required for the maintenance of physical strength. This chain is Thioredoxin-dependent peroxide reductase, mitochondrial (PRDX3), found in Pongo abelii (Sumatran orangutan).